A 957-amino-acid chain; its full sequence is Mediator of RNA polymerase II transcription subunit 16 (957 aa).

The disordered stretch occupies residues 855–883 (YTEVDAAPSGKTNAQGPPQQPQPQQQRRR).

The protein belongs to the Mediator complex subunit 16 family. Component of the Mediator complex.

It is found in the nucleus. Functionally, component of the Mediator complex, a coactivator involved in the regulated transcription of nearly all RNA polymerase II-dependent genes. Mediator functions as a bridge to convey information from gene-specific regulatory proteins to the basal RNA polymerase II transcription machinery. Mediator is recruited to promoters by direct interactions with regulatory proteins and serves as a scaffold for the assembly of a functional preinitiation complex with RNA polymerase II and the general transcription factors. The sequence is that of Mediator of RNA polymerase II transcription subunit 16 (sin4) from Aspergillus clavatus (strain ATCC 1007 / CBS 513.65 / DSM 816 / NCTC 3887 / NRRL 1 / QM 1276 / 107).